The chain runs to 248 residues: Probable transcriptional regulatory protein BARBAKC583_0163 (248 aa).

It belongs to the TACO1 family.

The protein resides in the cytoplasm. This Bartonella bacilliformis (strain ATCC 35685 / KC583 / Herrer 020/F12,63) protein is Probable transcriptional regulatory protein BARBAKC583_0163.